The primary structure comprises 154 residues: Transcription antitermination protein NusB (154 aa).

The protein belongs to the NusB family.

Involved in transcription antitermination. Required for transcription of ribosomal RNA (rRNA) genes. Binds specifically to the boxA antiterminator sequence of the ribosomal RNA (rrn) operons. This chain is Transcription antitermination protein NusB, found in Enterococcus faecalis (strain ATCC 700802 / V583).